Here is a 362-residue protein sequence, read N- to C-terminus: Phosphoserine aminotransferase (362 aa).

2 residues coordinate L-glutamate: Ser9 and Arg42. Residues 76-77, Trp102, Thr153, Asp174, and Gln197 contribute to the pyridoxal 5'-phosphate site; that span reads GR. The residue at position 198 (Lys198) is an N6-(pyridoxal phosphate)lysine. 239–240 is a pyridoxal 5'-phosphate binding site; the sequence is NT.

This sequence belongs to the class-V pyridoxal-phosphate-dependent aminotransferase family. SerC subfamily. As to quaternary structure, homodimer. It depends on pyridoxal 5'-phosphate as a cofactor.

Its subcellular location is the cytoplasm. The enzyme catalyses O-phospho-L-serine + 2-oxoglutarate = 3-phosphooxypyruvate + L-glutamate. It catalyses the reaction 4-(phosphooxy)-L-threonine + 2-oxoglutarate = (R)-3-hydroxy-2-oxo-4-phosphooxybutanoate + L-glutamate. It participates in amino-acid biosynthesis; L-serine biosynthesis; L-serine from 3-phospho-D-glycerate: step 2/3. It functions in the pathway cofactor biosynthesis; pyridoxine 5'-phosphate biosynthesis; pyridoxine 5'-phosphate from D-erythrose 4-phosphate: step 3/5. Functionally, catalyzes the reversible conversion of 3-phosphohydroxypyruvate to phosphoserine and of 3-hydroxy-2-oxo-4-phosphonooxybutanoate to phosphohydroxythreonine. The sequence is that of Phosphoserine aminotransferase from Klebsiella pneumoniae subsp. pneumoniae (strain ATCC 700721 / MGH 78578).